The sequence spans 635 residues: Probable serine/threonine-protein kinase DDB_G0270146 (635 aa).

In terms of domain architecture, Protein kinase spans 77–329 (VISDIAIGKG…AKELLSHPWI (253 aa)). ATP-binding positions include 83 to 91 (IGKGAFATV) and Lys106. Asp199 serves as the catalytic Proton acceptor. The segment covering 360–392 (SLLSNSSGGDDSVTDSDLSISNQSSRSSSFLLD) has biased composition (low complexity). Residues 360 to 405 (SLLSNSSGGDDSVTDSDLSISNQSSRSSSFLLDDGGGGGGSKNHTV) form a disordered region. Coiled-coil stretches lie at residues 417-456 (IEFN…KYRE) and 536-585 (KKAL…KDSS). A compositionally biased stretch (basic and acidic residues) spans 540–582 (EAQKRREKEQEKLKEQEKLKEKKKEKDIKKEKDKKDKKDKQLK). Positions 540–635 (EAQKRREKEQ…GRSSSKIFNE (96 aa)) are disordered. Positions 583–598 (DSSSSTTTTNSTPSTP) are enriched in low complexity. Over residues 626-635 (GRSSSKIFNE) the composition is skewed to polar residues.

This sequence belongs to the protein kinase superfamily. STE Ser/Thr protein kinase family. Requires Mg(2+) as cofactor.

It catalyses the reaction L-seryl-[protein] + ATP = O-phospho-L-seryl-[protein] + ADP + H(+). It carries out the reaction L-threonyl-[protein] + ATP = O-phospho-L-threonyl-[protein] + ADP + H(+). This chain is Probable serine/threonine-protein kinase DDB_G0270146, found in Dictyostelium discoideum (Social amoeba).